The chain runs to 309 residues: Protein EXORDIUM-like 1 (309 aa).

The signal sequence occupies residues 1–23; that stretch reads MASFVMGYFLLFAVAFMCLDART.

This sequence belongs to the EXORDIUM family.

It localises to the secreted. Its subcellular location is the extracellular space. It is found in the apoplast. May play a role in a brassinosteroid-dependent regulatory pathway that controls growth and development under low carbon and energy availability. This is Protein EXORDIUM-like 1 (EXL1) from Arabidopsis thaliana (Mouse-ear cress).